The primary structure comprises 416 residues: Keratin, type I cuticular Ha1 (416 aa).

The tract at residues 1–56 is head; it reads MPYNFCLPSLSCRTSCSSRPCVPPSCHSCTLPGACNIPANVSNCNWFCEGSFNGSE. Residues 56 to 367 enclose the IF rod domain; the sequence is EKETMQFLND…SLLESEDCNL (312 aa). The tract at residues 57–91 is coil 1A; that stretch reads KETMQFLNDRLASYLEKVRQLERDNAELENLIRER. A linker 1 region spans residues 92-102; it reads SQQQEPLLCPS. Residues 103 to 203 form a coil 1B region; that stretch reads YQSYFKTIEE…HEQEVNTLRC (101 aa). A linker 12 region spans residues 204–219; that stretch reads QLGDRLNVEVDAAPTV. Residues 220 to 363 form a coil 2 region; the sequence is DLNRVLNETR…NTYRSLLESE (144 aa). The tail stretch occupies residues 364–416; sequence DCNLPSNPCATTNACSKPIGPCLSNPCTSCVPPAPCTPCAPRPRCGPCNSFVR.

It belongs to the intermediate filament family. In terms of tissue distribution, present in scalp but not in hairless skin. Abundantly expressed in the differentiating cortex of growing (anagen) hair. Expression is restricted to the keratinocytes of the hair cortex and is absent from inner root sheath and medulla.

This is Keratin, type I cuticular Ha1 (KRT31) from Homo sapiens (Human).